Consider the following 211-residue polypeptide: Uracil phosphoribosyltransferase (211 aa).

5-phospho-alpha-D-ribose 1-diphosphate-binding positions include Arg-78, Arg-103, and 130–138 (DPMLATGGT). Uracil-binding positions include Ile-195 and 200–202 (GDA). Asp-201 is a binding site for 5-phospho-alpha-D-ribose 1-diphosphate.

The protein belongs to the UPRTase family. Requires Mg(2+) as cofactor.

The enzyme catalyses UMP + diphosphate = 5-phospho-alpha-D-ribose 1-diphosphate + uracil. The protein operates within pyrimidine metabolism; UMP biosynthesis via salvage pathway; UMP from uracil: step 1/1. Its activity is regulated as follows. Allosterically activated by GTP. In terms of biological role, catalyzes the conversion of uracil and 5-phospho-alpha-D-ribose 1-diphosphate (PRPP) to UMP and diphosphate. This is Uracil phosphoribosyltransferase from Arthrobacter sp. (strain FB24).